Reading from the N-terminus, the 194-residue chain is Threonylcarbamoyl-AMP synthase (194 aa).

A YrdC-like domain is found at 11-194 (FRNLMKIINA…GINYKIIRKG (184 aa)).

This sequence belongs to the SUA5 family. TsaC subfamily.

The protein resides in the cytoplasm. It catalyses the reaction L-threonine + hydrogencarbonate + ATP = L-threonylcarbamoyladenylate + diphosphate + H2O. In terms of biological role, required for the formation of a threonylcarbamoyl group on adenosine at position 37 (t(6)A37) in tRNAs that read codons beginning with adenine. Catalyzes the conversion of L-threonine, HCO(3)(-)/CO(2) and ATP to give threonylcarbamoyl-AMP (TC-AMP) as the acyladenylate intermediate, with the release of diphosphate. The protein is Threonylcarbamoyl-AMP synthase of Wigglesworthia glossinidia brevipalpis.